A 710-amino-acid polypeptide reads, in one-letter code: Forkhead box protein P2 (710 aa).

Polar residues predominate over residues 1–28 (MMQESATETISNSSMNQNGMSTLSSQLD). Disordered stretches follow at residues 1–44 (MMQE…SSEV) and 272–334 (HSQE…TGAS). Positions 273 to 283 (SQEDNGIKHGG) are enriched in basic and acidic residues. A compositionally biased stretch (low complexity) spans 287 to 300 (TTNNSSSTTSSTTS). Over residues 310–319 (SIVNGQSSVL) the composition is skewed to polar residues. The span at 321 to 332 (ARRDSSSHEETG) shows a compositional bias: basic and acidic residues. Residues 343 to 366 (CKWPGCESICEDFGQFLKHLNNEH) form a C2H2-type zinc finger. Residues 383 to 404 (VQQLEIQLSKERERLQAMMTHL) are leucine-zipper. The CTBP1-binding stretch occupies residues 417-421 (PLNLV). Low complexity predominate over residues 433–454 (TSPQSLPQTPTTPTAPVTPITQ). The disordered stretch occupies residues 433–460 (TSPQSLPQTPTTPTAPVTPITQGPSVIT). Positions 499-589 (RPPFTYATLI…SQKITGSPTL (91 aa)) form a DNA-binding region, fork-head. Disordered stretches follow at residues 644 to 663 (LDHI…QPHI) and 673 to 710 (VIAE…EDLE). Over residues 694-710 (LEDDREIEEEPLSEDLE) the composition is skewed to acidic residues.

In terms of assembly, forms homodimers and heterodimers with FOXP1 and FOXP4. Dimerization is required for DNA-binding. Interacts with CTBP1. Interacts with FOXP1. Interacts with TBR1. Interacts with ZMYM2.

The protein localises to the nucleus. Transcriptional repressor that may play a role in the specification and differentiation of lung epithelium. May also play a role in developing neural, gastrointestinal and cardiovascular tissues. Can act with CTBP1 to synergistically repress transcription but CTPBP1 is not essential. Plays a role in synapse formation by regulating SRPX2 levels. The protein is Forkhead box protein P2 (Foxp2) of Rattus norvegicus (Rat).